A 245-amino-acid polypeptide reads, in one-letter code: Enolase-phosphatase E1 (245 aa).

This sequence belongs to the HAD-like hydrolase superfamily. MasA/MtnC family. In terms of assembly, monomer. It depends on Mg(2+) as a cofactor.

It carries out the reaction 5-methylsulfanyl-2,3-dioxopentyl phosphate + H2O = 1,2-dihydroxy-5-(methylsulfanyl)pent-1-en-3-one + phosphate. It functions in the pathway amino-acid biosynthesis; L-methionine biosynthesis via salvage pathway; L-methionine from S-methyl-5-thio-alpha-D-ribose 1-phosphate: step 3/6. The protein operates within amino-acid biosynthesis; L-methionine biosynthesis via salvage pathway; L-methionine from S-methyl-5-thio-alpha-D-ribose 1-phosphate: step 4/6. Bifunctional enzyme that catalyzes the enolization of 2,3-diketo-5-methylthiopentyl-1-phosphate (DK-MTP-1-P) into the intermediate 2-hydroxy-3-keto-5-methylthiopentenyl-1-phosphate (HK-MTPenyl-1-P), which is then dephosphorylated to form the acireductone 1,2-dihydroxy-3-keto-5-methylthiopentene (DHK-MTPene). This is Enolase-phosphatase E1 from Synechococcus sp. (strain CC9902).